The chain runs to 689 residues: Small ribosomal subunit protein mS39 (689 aa).

The N-terminal 37 residues, 1–37, are a transit peptide targeting the mitochondrion; the sequence is MAVVSAVRWLGLRSRLGQPLTGRRAGLCEQARSCRFY. Residue lysine 126 is modified to N6-acetyllysine. 10 PPR repeats span residues 149–183, 184–219, 255–289, 290–330, 331–367, 368–409, 412–446, 454–488, 489–523, and 572–606; these read IKDISEAALKERIELRKVKASVDMFDQLLQAGTTV, SLETTNSLLDLLCYYGDQEPSTDYHFQQTGQSEALE, NEHSYCTMIRGMVKHRAYEQALNLYTELLNNRLHA, DVYT…KVKP, NLQTFNTILKCLRRFHVFARSPALQVLREMKAIGIEP, SLAT…SPKD, DDKFFQSAMSICSSLRDLELAYQVHGLLKTGDNWK, RNFYYSKFFDLICLMEQIDVTLKWYEDLIPSAYFP, HSQTMIHLLQALDVANRLEVIPKIWKDSKEYGHTF, and PATSLNCIAILFLRAGRTQEAWKMLGLFRKHNKIP. The tract at residues 665–689 is disordered; that stretch reads NLTALTSDSDTDSSSDSDSDTSEGK. Residues 673 to 689 show a composition bias toward acidic residues; the sequence is SDTDSSSDSDSDTSEGK.

The protein belongs to the mitochondrion-specific ribosomal protein mS39 family. As to quaternary structure, component of the mitochondrial small ribosomal subunit (mt-SSU). Mature mammalian 55S mitochondrial ribosomes consist of a small (28S) and a large (39S) subunit. The 28S small subunit contains a 12S ribosomal RNA (12S mt-rRNA) and 30 different proteins. The 39S large subunit contains a 16S rRNA (16S mt-rRNA), a copy of mitochondrial valine transfer RNA (mt-tRNA(Val)), which plays an integral structural role, and 52 different proteins. Associated with the 12S mitochondrial rRNA (12S mt-rRNA). As to expression, abundant in testes, skeletal muscle and heart tissue.

Its subcellular location is the mitochondrion. Mitochondrial RNA-binding protein that has a role in mitochondrial translation. The sequence is that of Small ribosomal subunit protein mS39 (PTCD3) from Homo sapiens (Human).